The chain runs to 302 residues: Citrate lyase subunit beta (302 aa).

The substrate site is built by Arg76 and Glu139. Glu139 and Asp166 together coordinate Mg(2+).

The protein belongs to the HpcH/HpaI aldolase family. Citrate lyase beta subunit subfamily. Oligomer with a subunit composition of (alpha,beta,gamma)6. The cofactor is Mg(2+).

The protein resides in the cytoplasm. It catalyses the reaction citrate = oxaloacetate + acetate. The catalysed reaction is (3S)-citryl-CoA = oxaloacetate + acetyl-CoA. Functionally, represents a citryl-ACP lyase. In Escherichia coli O6:H1 (strain CFT073 / ATCC 700928 / UPEC), this protein is Citrate lyase subunit beta (citE).